Here is a 288-residue protein sequence, read N- to C-terminus: Light-independent protochlorophyllide reductase iron-sulfur ATP-binding protein (288 aa).

Residues 12 to 17 and lysine 41 each bind ATP; that span reads GIGKST. Mg(2+) is bound at residue serine 16. Positions 97 and 131 each coordinate [4Fe-4S] cluster. ATP is bound at residue 182-183; sequence NR.

Belongs to the NifH/BchL/ChlL family. In terms of assembly, homodimer. Protochlorophyllide reductase is composed of three subunits; ChlL, ChlN and ChlB. The cofactor is [4Fe-4S] cluster.

The enzyme catalyses chlorophyllide a + oxidized 2[4Fe-4S]-[ferredoxin] + 2 ADP + 2 phosphate = protochlorophyllide a + reduced 2[4Fe-4S]-[ferredoxin] + 2 ATP + 2 H2O. Its pathway is porphyrin-containing compound metabolism; chlorophyll biosynthesis (light-independent). In terms of biological role, component of the dark-operative protochlorophyllide reductase (DPOR) that uses Mg-ATP and reduced ferredoxin to reduce ring D of protochlorophyllide (Pchlide) to form chlorophyllide a (Chlide). This reaction is light-independent. The L component serves as a unique electron donor to the NB-component of the complex, and binds Mg-ATP. The sequence is that of Light-independent protochlorophyllide reductase iron-sulfur ATP-binding protein from Synechocystis sp. (strain ATCC 27184 / PCC 6803 / Kazusa).